The following is a 122-amino-acid chain: Spermidine export protein MdtJ (122 aa).

Transmembrane regions (helical) follow at residues 1-21 (MIYW…TLSM), 31-51 (TGHI…SMAV), 54-74 (VALG…ITLF), and 81-101 (EPIS…IMLV).

It belongs to the drug/metabolite transporter (DMT) superfamily. Small multidrug resistance (SMR) (TC 2.A.7.1) family. MdtJ subfamily. Forms a complex with MdtI.

The protein localises to the cell inner membrane. Catalyzes the excretion of spermidine. The protein is Spermidine export protein MdtJ of Serratia proteamaculans (strain 568).